The primary structure comprises 529 residues: Peptide chain release factor 3 (529 aa).

Residues 11-280 enclose the tr-type G domain; it reads AKRRTFAIIS…GLVEWAPAPM (270 aa). Residues 20-27, 88-92, and 142-145 each bind GTP; these read SHPDAGKT, DTPGH, and NKLD.

This sequence belongs to the TRAFAC class translation factor GTPase superfamily. Classic translation factor GTPase family. PrfC subfamily.

It is found in the cytoplasm. Functionally, increases the formation of ribosomal termination complexes and stimulates activities of RF-1 and RF-2. It binds guanine nucleotides and has strong preference for UGA stop codons. It may interact directly with the ribosome. The stimulation of RF-1 and RF-2 is significantly reduced by GTP and GDP, but not by GMP. In Shigella sonnei (strain Ss046), this protein is Peptide chain release factor 3.